The primary structure comprises 352 residues: MTKRKLSKGQQRRVQENHKKRLQSKEKKNHVELDDTQLGEATEGLVISRFGQHADIEAADGSITRCNIRRTISSLVTGDRVVWRPALQTQENVRVNGIVEAVHERTSVLTRPDYYDGIKPIAANIDQIIIVSAILPELSLNIIDRYLVACETLNIEPLIVLNKVDMLDAESRAMVSEWMQIYKDIGYRVLEVSSYTKEGLEALTQALIGRISIFAGQSGVGKSSLLNTLLPPMEESILVNQVSDNSGLGQHTTTASRLYHFPLGGDVIDSPGVREFGLWHLTPEQVTKGFIEFRPFLGGCKFRDCKHNDDPGCLITEAVDKGEIAPTRFENYHRILESMSQVKVRKNINLDS.

Residues 1–11 (MTKRKLSKGQQ) are compositionally biased toward basic residues. The interval 1–35 (MTKRKLSKGQQRRVQENHKKRLQSKEKKNHVELDD) is disordered. Positions 13–33 (RVQENHKKRLQSKEKKNHVEL) are enriched in basic and acidic residues. Positions 114 to 276 (YYDGIKPIAA…VIDSPGVREF (163 aa)) constitute a CP-type G domain. Residues 162–165 (NKVD) and 216–224 (GQSGVGKSS) contribute to the GTP site. Zn(2+)-binding residues include C300, C305, H307, and C313.

It belongs to the TRAFAC class YlqF/YawG GTPase family. RsgA subfamily. In terms of assembly, monomer. Associates with 30S ribosomal subunit, binds 16S rRNA. The cofactor is Zn(2+).

Its subcellular location is the cytoplasm. Functionally, one of several proteins that assist in the late maturation steps of the functional core of the 30S ribosomal subunit. Helps release RbfA from mature subunits. May play a role in the assembly of ribosomal proteins into the subunit. Circularly permuted GTPase that catalyzes slow GTP hydrolysis, GTPase activity is stimulated by the 30S ribosomal subunit. The sequence is that of Small ribosomal subunit biogenesis GTPase RsgA from Proteus mirabilis (strain HI4320).